Reading from the N-terminus, the 141-residue chain is Acetyltransferase YpeA (141 aa).

Positions 1 to 141 (MEIRVFRQED…GKRLIEDEEY (141 aa)) constitute an N-acetyltransferase domain.

This sequence belongs to the acetyltransferase family. YpeA subfamily.

In Salmonella choleraesuis (strain SC-B67), this protein is Acetyltransferase YpeA.